The chain runs to 88 residues: Small ribosomal subunit protein bS18 (88 aa).

Residues 1–22 (MSTKNAKPKKEAQRRPSRKAKV) form a disordered region.

It belongs to the bacterial ribosomal protein bS18 family. In terms of assembly, part of the 30S ribosomal subunit. Forms a tight heterodimer with protein bS6.

Its function is as follows. Binds as a heterodimer with protein bS6 to the central domain of the 16S rRNA, where it helps stabilize the platform of the 30S subunit. This Thermus thermophilus protein is Small ribosomal subunit protein bS18 (rpsR).